The primary structure comprises 179 residues: Apoptosis regulator Bcl-2 homolog (179 aa).

The BH1 motif lies at 76–95 (ELFKDLINWGRICGFIVFSA). Positions 126–141 (PWMISHGGQEEFLAFS) match the BH2 motif.

The protein belongs to the Bcl-2 family. As to quaternary structure, interacts with host BECN1 (via BH3 homology domain); this interaction allows the virus to inhibit BECN1, and thus autophagy. Interacts with host BID. Interacts with host BAX.

The protein localises to the host mitochondrion. It is found in the host endoplasmic reticulum. Suppresses apoptosis in host cell to promote the viral replication. Has the ability to potentially bind to all the members of the proapoptotic Bcl-2 family. Inhibits autophagy by interacting with host Beclin 1 (BECN1). The polypeptide is Apoptosis regulator Bcl-2 homolog (African swine fever virus (isolate Pig/Kenya/KEN-50/1950) (ASFV)).